The chain runs to 416 residues: Adrenocortical dysplasia protein (416 aa).

The short motif at 11-13 (PWI) is the PWI element. Ser-25 bears the Phosphoserine mark. The tract at residues 156–245 (ESASSSAGLT…SSTGSSQKAR (90 aa)) is interaction with POT1. Residues 234–251 (ILSSTGSSQKARGTSASP) show a composition bias toward polar residues. The interval 234 to 306 (ILSSTGSSQK…TSPPCNSTPS (73 aa)) is disordered. Positions 259–272 (SGASVSLLSALATS) are enriched in low complexity. Polar residues predominate over residues 273-292 (DPGQMDSSQSPPAVGSTSPR). Phosphoserine is present on residues Ser-313 and Ser-317. Residue Lys-345 forms a Glycyl lysine isopeptide (Lys-Gly) (interchain with G-Cter in SUMO2) linkage.

As to quaternary structure, component of the shelterin complex (telosome) composed of TERF1, TERF2, TINF2, TERF2IP ACD and POT1. Forms heterodimers with POT1. Identified in a complex with POT1 and single-stranded telomeric DNA. Interacts with STN1 and TINF2. As to expression, ubiquitous.

It localises to the nucleus. The protein resides in the chromosome. It is found in the telomere. In terms of biological role, component of the shelterin complex (telosome) that is involved in the regulation of telomere length and protection. Shelterin associates with arrays of double-stranded TTAGGG repeats added by telomerase and protects chromosome ends. Without its protective activity, telomeres are no longer hidden from the DNA damage surveillance and chromosome ends are inappropriately processed by DNA repair pathways. Promotes binding of POT1 to single-stranded telomeric DNA. Modulates the inhibitory effects of POT1 on telomere elongation. The ACD-POT1 heterodimer enhances telomere elongation by recruiting telomerase to telomeres and increasing its processivity. May play a role in organogenesis. The sequence is that of Adrenocortical dysplasia protein from Mus musculus (Mouse).